A 672-amino-acid chain; its full sequence is Leucine-rich repeat receptor-like protein kinase PXC1 (672 aa).

A signal peptide spans 1–21; it reads MAAKPLLLPLLLLLHLSITLA. Over 22 to 269 the chain is Extracellular; sequence QNDTNALTLF…IHSHRGIKPG (248 aa). 3 N-linked (GlcNAc...) asparagine glycosylation sites follow: N23, N44, and N101. The LRR 1 repeat unit spans residues 87 to 110; that stretch reads LDQLRLLDLHDNRLNGTVSPLTNC. K111 is covalently cross-linked (Glycyl lysine isopeptide (Lys-Gly) (interchain with G-Cter in ubiquitin)). LRR repeat units follow at residues 112 to 134, 135 to 158, 160 to 181, and 182 to 205; these read NLRL…ISFL, KRMI…ILGF, RVLT…FSQM, and KSLL…VVKK. N188 and N197 each carry an N-linked (GlcNAc...) asparagine glycan. The segment covering 233-249 has biased composition (polar residues); the sequence is ESSNTDQIVPSNPTSIP. A disordered region spans residues 233–254; it reads ESSNTDQIVPSNPTSIPHSPVS. A helical membrane pass occupies residues 270–290; sequence IIAAVIGGCVAVIVLVSFGFA. The Cytoplasmic portion of the chain corresponds to 291 to 672; the sequence is FCCGRLDRNG…MSPSLATTDG (382 aa). Residues 300-333 form a disordered region; sequence GERSKSGSVETGFVGGGEGKRRSSYGEGGESDAT. Residues 357 to 645 enclose the Protein kinase domain; that stretch reads KASAEMLGKG…AEVVKMVEEI (289 aa). ATP contacts are provided by residues 363–371 and K386; that span reads LGKGSLGTV. The segment at 650–672 is disordered; sequence SPVGEDFDESRNSMSPSLATTDG. Over residues 661–672 the composition is skewed to polar residues; that stretch reads NSMSPSLATTDG.

The protein belongs to the protein kinase superfamily. Ser/Thr protein kinase family. As to expression, expressed in the vascular strands of cotyledons, the shoot apex, hypocotyls, roots, leaves, stems and flowers.

It localises to the cell membrane. Its function is as follows. Leucine-rich repeat receptor-like protein kinase involved in secondary cell wall formation in xylem fibers. May play a role in a regulatory network which also incorporates the TDR/PXY signaling pathway and regulates the maturation of interfascicular fiber cells. May promote the initiation of secondary cell wall deposition during the procedure of cell expansion. This chain is Leucine-rich repeat receptor-like protein kinase PXC1, found in Arabidopsis thaliana (Mouse-ear cress).